The primary structure comprises 404 residues: Interferon-activable protein 205-A (404 aa).

Positions 1–88 (MENEYKRLVL…AEILKKERSE (88 aa)) constitute a Pyrin domain. The segment at 85 to 198 (ERSEVTEETS…KSQPQNQNIP (114 aa)) is disordered. Composition is skewed to low complexity over residues 102-112 (ASPATPTSTTS) and 122-132 (TSTTQEETSTA). A compositionally biased stretch (basic and acidic residues) spans 137–147 (GMSEEKTDVKK). A compositionally biased stretch (low complexity) spans 168–185 (QSPISQVSSSASSNIPSA). A compositionally biased stretch (polar residues) spans 186 to 197 (KNQKSQPQNQNI). The HIN-200 domain occupies 192 to 392 (PQNQNIPRGA…CGDHSFVKVT (201 aa)).

Belongs to the HIN-200 family.

It is found in the nucleus. Its function is as follows. May act as a transcriptional regulator in the myeloid lineage. Inhibits cell growth via p53/TP53 and RB1-dependent and independent pathways. The polypeptide is Interferon-activable protein 205-A (Ifi205a) (Mus musculus (Mouse)).